Reading from the N-terminus, the 58-residue chain is Large ribosomal subunit protein bL32 (58 aa).

Residues 1-20 are compositionally biased toward basic residues; the sequence is MALPKHKKSKSKRDKRRTHQ. Positions 1 to 26 are disordered; the sequence is MALPKHKKSKSKRDKRRTHQKLTAPN.

The protein belongs to the bacterial ribosomal protein bL32 family.

This is Large ribosomal subunit protein bL32 from Desulfatibacillum aliphaticivorans.